The following is a 418-amino-acid chain: MGDKGTRVFKKASPNGKLTVYLGKRDFVDHIDLVEPVDGVVLVDPEYLKERRVYVTLTCAFRYGREDLDVLGLTFRKDLFVANVQSFPPAPEDKKPLTRLQERLIKKLGEHAYPFTFEIPPNLPCSVTLQPGPEDTGKACGVDYEVKAFCAENLEEKIHKRNSVRLVIRKVQYAPERPGPQPTAETTRQFLMSDKPLHLEASLDKEIYYHGEPISVNVHVTNNTNKTVKKIKISVRQYADICLFNTAQYKCPVAMEEADDTVAPSSTFCKVYTLTPFLANNREKRGLALDGKLKHEDTNLASSTLLREGANREILGIIVSYKVKVKLVVSRGGLLGDLASSDVAVELPFTLMHPKPKEEPPHREVPEHETPVDTNLIELDTNDDDIVFEDFARQRLKGMKDDKEEEEDGTGSPRLNDR.

The segment at Met-1–Ser-163 is interaction with SRC. Positions Pro-45–Ser-86 are interaction with CHRM2. Tyr-47 is modified (phosphotyrosine). The 1D-myo-inositol hexakisphosphate site is built by Lys-250, Met-255, Lys-324, and Lys-326. The segment at Ile-318–Arg-418 is interaction with TRAF6. Residues His-353 to Asn-375 form a disordered region. A compositionally biased stretch (basic and acidic residues) spans Lys-355–Pro-371. The [DE]-X(1,2)-F-X-X-[FL]-X-X-X-R motif motif lies at Asp-385–Arg-395. The segment at Lys-397–Arg-418 is disordered. At Ser-412 the chain carries Phosphoserine; by GRK5.

This sequence belongs to the arrestin family. As to quaternary structure, monomer. Homodimer. Homooligomer; the self-association is mediated by InsP6-binding. Heterooligomer with ARRB2; the association is mediated by InsP6-binding. Interacts with ADRB2 (phosphorylated). Interacts with CHRM2 (phosphorylated). Interacts with LHCGR. Interacts with CYTH2 and CASR. Interacts with AP2B1 (dephosphorylated at 'Tyr-737'); phosphorylation of AP2B1 at 'Tyr-737' disrupts the interaction. Interacts (dephosphorylated at Ser-412) with CLTC. Interacts with CCR2 and GRK2. Interacts with CRR5. Interacts with PTAFR (phosphorylated on serine residues). Interacts with CLTC and MAP2K3. Interacts with CREB1. Interacts with TRAF6. Interacts with IGF1R and MDM2. Interacts with C5AR1. Interacts with PDE4D. Interacts with SRC (via the SH3 domain and the protein kinase domain); the interaction is independent of the phosphorylation state of SRC C-terminus. Interacts with TACR1. Interacts with RAF1. Interacts with CHUK, IKBKB and MAP3K14. Interacts with DVL1; the interaction is enhanced by phosphorylation of DVL1. Interacts with DVL2; the interaction is enhanced by phosphorylation of DVL2. Interacts with IGF1R. Associates with MAP kinase p38. Part of a MAPK signaling complex consisting of TACR1, ARRB1, SRC, MAPK1 (activated) and MAPK3 (activated). Part of a MAPK signaling complex consisting of F2RL1, ARRB1, RAF1, MAPK1 (activated) and MAPK3 (activated). Interacts with GPR143. Interacts with MAP2K4/MKK4. Interacts with HCK and CXCR1 (phosphorylated). Interacts with ACKR3 and ACKR4. Interacts with ARRDC1; the interaction is direct. Interacts with GPR61, GPR62 and GPR135. Constitutively phosphorylated at Ser-412 in the cytoplasm. At the plasma membrane, is rapidly dephosphorylated, a process that is required for clathrin binding and ADRB2 endocytosis but not for ADRB2 binding and desensitization. Once internalized, is rephosphorylated. In terms of processing, the ubiquitination status appears to regulate the formation and trafficking of beta-arrestin-GPCR complexes and signaling. Ubiquitination appears to occur GPCR-specific. Ubiquitinated by MDM2; the ubiquitination is required for rapid internalization of ADRB2. Deubiquitinated by USP33; the deubiquitination leads to a dissociation of the beta-arrestin-GPCR complex. Stimulation of a class A GPCR, such as ADRB2, induces transient ubiquitination and subsequently promotes association with USP33. Beta-arrestin 1A is found in cortex, cerebellum, striatum, pineal gland, retina and heart. Beta-arrestin 1B is found in spleen, lung, pituitary and kidney.

It is found in the cytoplasm. It localises to the nucleus. The protein resides in the cell membrane. The protein localises to the membrane. Its subcellular location is the clathrin-coated pit. It is found in the cell projection. It localises to the pseudopodium. The protein resides in the cytoplasmic vesicle. In terms of biological role, functions in regulating agonist-mediated G-protein coupled receptor (GPCR) signaling by mediating both receptor desensitization and resensitization processes. During homologous desensitization, beta-arrestins bind to the GPRK-phosphorylated receptor and sterically preclude its coupling to the cognate G-protein; the binding appears to require additional receptor determinants exposed only in the active receptor conformation. The beta-arrestins target many receptors for internalization by acting as endocytic adapters (CLASPs, clathrin-associated sorting proteins) and recruiting the GPRCs to the adapter protein 2 complex 2 (AP-2) in clathrin-coated pits (CCPs). However, the extent of beta-arrestin involvement appears to vary significantly depending on the receptor, agonist and cell type. Internalized arrestin-receptor complexes traffic to intracellular endosomes, where they remain uncoupled from G-proteins. Two different modes of arrestin-mediated internalization occur. Class A receptors, like ADRB2, OPRM1, ENDRA, D1AR and ADRA1B dissociate from beta-arrestin at or near the plasma membrane and undergo rapid recycling. Class B receptors, like AVPR2, AGTR1, NTSR1, TRHR and TACR1 internalize as a complex with arrestin and traffic with it to endosomal vesicles, presumably as desensitized receptors, for extended periods of time. Receptor resensitization then requires that receptor-bound arrestin is removed so that the receptor can be dephosphorylated and returned to the plasma membrane. Involved in internalization of P2RY4 and UTP-stimulated internalization of P2RY2. Involved in phosphorylation-dependent internalization of OPRD1 ands subsequent recycling. Involved in the degradation of cAMP by recruiting cAMP phosphodiesterases to ligand-activated receptors. Beta-arrestins function as multivalent adapter proteins that can switch the GPCR from a G-protein signaling mode that transmits short-lived signals from the plasma membrane via small molecule second messengers and ion channels to a beta-arrestin signaling mode that transmits a distinct set of signals that are initiated as the receptor internalizes and transits the intracellular compartment. Acts as a signaling scaffold for MAPK pathways such as MAPK1/3 (ERK1/2). ERK1/2 activated by the beta-arrestin scaffold is largely excluded from the nucleus and confined to cytoplasmic locations such as endocytic vesicles, also called beta-arrestin signalosomes. Recruits c-Src/SRC to ADRB2 resulting in ERK activation. GPCRs for which the beta-arrestin-mediated signaling relies on both ARRB1 and ARRB2 (codependent regulation) include ADRB2, F2RL1 and PTH1R. For some GPCRs the beta-arrestin-mediated signaling relies on either ARRB1 or ARRB2 and is inhibited by the other respective beta-arrestin form (reciprocal regulation). Inhibits ERK1/2 signaling in AGTR1- and AVPR2-mediated activation (reciprocal regulation). Is required for SP-stimulated endocytosis of NK1R and recruits c-Src/SRC to internalized NK1R resulting in ERK1/2 activation, which is required for the antiapoptotic effects of SP. Is involved in proteinase-activated F2RL1-mediated ERK activity. Acts as a signaling scaffold for the AKT1 pathway. Is involved in alpha-thrombin-stimulated AKT1 signaling. Is involved in IGF1-stimulated AKT1 signaling leading to increased protection from apoptosis. Involved in activation of the p38 MAPK signaling pathway and in actin bundle formation. Involved in F2RL1-mediated cytoskeletal rearrangement and chemotaxis. Involved in AGTR1-mediated stress fiber formation by acting together with GNAQ to activate RHOA. Appears to function as signaling scaffold involved in regulation of MIP-1-beta-stimulated CCR5-dependent chemotaxis. Involved in attenuation of NF-kappa-B-dependent transcription in response to GPCR or cytokine stimulation by interacting with and stabilizing CHUK. May serve as nuclear messenger for GPCRs. Involved in OPRD1-stimulated transcriptional regulation by translocating to CDKN1B and FOS promoter regions and recruiting EP300 resulting in acetylation of histone H4. Involved in regulation of LEF1 transcriptional activity via interaction with DVL1 and/or DVL2 Also involved in regulation of receptors other than GPCRs. Involved in Toll-like receptor and IL-1 receptor signaling through the interaction with TRAF6 which prevents TRAF6 autoubiquitination and oligomerization required for activation of NF-kappa-B and JUN. Involved in IL8-mediated granule release in neutrophils. Binds phosphoinositides. Binds inositol hexakisphosphate (InsP6). Required for atypical chemokine receptor ACKR2-induced RAC1-LIMK1-PAK1-dependent phosphorylation of cofilin (CFL1) and for the up-regulation of ACKR2 from endosomal compartment to cell membrane, increasing its efficiency in chemokine uptake and degradation. Involved in the internalization of the atypical chemokine receptor ACKR3. Negatively regulates the NOTCH signaling pathway by mediating the ubiquitination and degradation of NOTCH1 by ITCH. Participates in the recruitment of the ubiquitin-protein ligase to the receptor. This is Beta-arrestin-1 (ARRB1) from Bos taurus (Bovine).